We begin with the raw amino-acid sequence, 142 residues long: Universal stress protein D (142 aa).

This sequence belongs to the universal stress protein A family.

The protein resides in the cytoplasm. Functionally, required for resistance to DNA-damaging agents. In Escherichia coli (strain K12), this protein is Universal stress protein D (uspD).